A 320-amino-acid polypeptide reads, in one-letter code: Cyclin-D6-1 (320 aa).

The interval 279–320 (HHRSASSESERTTTVGSAANSADAKRRCMGPPRQWGVGGPDE) is disordered.

It belongs to the cyclin family. Cyclin D subfamily.

This Oryza sativa subsp. japonica (Rice) protein is Cyclin-D6-1 (CYCD6-1).